The primary structure comprises 427 residues: Serine hydroxymethyltransferase (427 aa).

122–124 (GHI) contributes to the (6S)-5,6,7,8-tetrahydrofolate binding site. At K228 the chain carries N6-(pyridoxal phosphate)lysine.

Belongs to the SHMT family. In terms of assembly, homodimer. It depends on pyridoxal 5'-phosphate as a cofactor.

It is found in the cytoplasm. It functions in the pathway amino-acid biosynthesis; glycine biosynthesis; glycine from L-serine: step 1/1. Its function is as follows. Catalyzes the reversible interconversion of serine and glycine with a modified folate serving as the one-carbon carrier. Also exhibits a pteridine-independent aldolase activity toward beta-hydroxyamino acids, producing glycine and aldehydes, via a retro-aldol mechanism. The polypeptide is Serine hydroxymethyltransferase (Thermococcus onnurineus (strain NA1)).